Consider the following 239-residue polypeptide: Ribonuclease HII (239 aa).

One can recognise an RNase H type-2 domain in the interval 30–221 (GPVAGVDEVG…VRRLVTAGTP (192 aa)). Asp36, Glu37, and Asp130 together coordinate a divalent metal cation.

This sequence belongs to the RNase HII family. Requires Mn(2+) as cofactor. Mg(2+) serves as cofactor.

It is found in the cytoplasm. It carries out the reaction Endonucleolytic cleavage to 5'-phosphomonoester.. In terms of biological role, endonuclease that specifically degrades the RNA of RNA-DNA hybrids. This chain is Ribonuclease HII, found in Mycobacterium sp. (strain KMS).